A 308-amino-acid polypeptide reads, in one-letter code: Glutamyl-Q tRNA(Asp) synthetase (308 aa).

Residues 19–23 and Glu55 contribute to the L-glutamate site; that span reads RFAPS. Positions 22 to 32 match the 'HIGH' region motif; it reads PSPSGELHFGS. Positions 111, 113, 125, and 129 each coordinate Zn(2+). The L-glutamate site is built by Tyr182 and Arg200. Residues 238 to 242 carry the 'KMSKS' region motif; the sequence is KLSKQ. Lys241 serves as a coordination point for ATP.

It belongs to the class-I aminoacyl-tRNA synthetase family. GluQ subfamily. Zn(2+) serves as cofactor.

Functionally, catalyzes the tRNA-independent activation of glutamate in presence of ATP and the subsequent transfer of glutamate onto a tRNA(Asp). Glutamate is transferred on the 2-amino-5-(4,5-dihydroxy-2-cyclopenten-1-yl) moiety of the queuosine in the wobble position of the QUC anticodon. In Escherichia coli (strain K12 / MC4100 / BW2952), this protein is Glutamyl-Q tRNA(Asp) synthetase.